The chain runs to 428 residues: Adenylosuccinate synthetase (428 aa).

Residues 11–17 (GDEGKGK) and 39–41 (GHT) each bind GTP. D12 serves as the catalytic Proton acceptor. Mg(2+) contacts are provided by D12 and G39. IMP-binding positions include 12–15 (DEGK), 37–40 (NAGH), T130, R144, N226, T241, and R305. The Proton donor role is filled by H40. 301-307 (VTTGRKR) is a substrate binding site. GTP contacts are provided by residues R307, 333–335 (KLD), and 415–417 (GTG).

The protein belongs to the adenylosuccinate synthetase family. As to quaternary structure, homodimer. Mg(2+) serves as cofactor.

It is found in the cytoplasm. The enzyme catalyses IMP + L-aspartate + GTP = N(6)-(1,2-dicarboxyethyl)-AMP + GDP + phosphate + 2 H(+). Its pathway is purine metabolism; AMP biosynthesis via de novo pathway; AMP from IMP: step 1/2. Its function is as follows. Plays an important role in the de novo pathway and in the salvage pathway of purine nucleotide biosynthesis. Catalyzes the first committed step in the biosynthesis of AMP from IMP. This is Adenylosuccinate synthetase from Lodderomyces elongisporus (strain ATCC 11503 / CBS 2605 / JCM 1781 / NBRC 1676 / NRRL YB-4239) (Yeast).